We begin with the raw amino-acid sequence, 485 residues long: Serine hydroxymethyltransferase, mitochondrial (485 aa).

The residue at position 259 (K259) is an N6-(pyridoxal phosphate)lysine.

This sequence belongs to the SHMT family. Homotetramer. The cofactor is pyridoxal 5'-phosphate.

The protein resides in the mitochondrion. The catalysed reaction is (6R)-5,10-methylene-5,6,7,8-tetrahydrofolate + glycine + H2O = (6S)-5,6,7,8-tetrahydrofolate + L-serine. Its pathway is one-carbon metabolism; tetrahydrofolate interconversion. Its function is as follows. Interconversion of serine and glycine. In Candida glabrata (strain ATCC 2001 / BCRC 20586 / JCM 3761 / NBRC 0622 / NRRL Y-65 / CBS 138) (Yeast), this protein is Serine hydroxymethyltransferase, mitochondrial (SHM1).